A 111-amino-acid chain; its full sequence is Thioredoxin 2 (111 aa).

One can recognise a Thioredoxin domain in the interval 2-109 (SKGVITITDA…LLSFLDTHLN (108 aa)). Cysteine 33 and cysteine 36 are oxidised to a cystine.

This sequence belongs to the thioredoxin family.

In terms of biological role, participates in various redox reactions through the reversible oxidation of its active center dithiol to a disulfide and catalyzes dithiol-disulfide exchange reactions. The polypeptide is Thioredoxin 2 (trxB) (Nostoc sp. (strain PCC 7120 / SAG 25.82 / UTEX 2576)).